Reading from the N-terminus, the 708-residue chain is Wall-associated receptor kinase-like 14 (708 aa).

A signal peptide spans M1–A42. Residues N43, N88, N101, N131, N158, N167, and N184 are each glycosylated (N-linked (GlcNAc...) asparagine). Residues N43 to T285 are Extracellular-facing. Residues I286 to C306 traverse the membrane as a helical segment. Residues K307 to R708 lie on the Cytoplasmic side of the membrane. The Protein kinase domain occupies F348 to I629. ATP contacts are provided by residues L354 to V362 and K376. Residue D472 is the Proton acceptor of the active site. Disordered regions lie at residues S636–S659 and V686–R708. Positions S643–V652 are enriched in basic and acidic residues. Residues S692 to R708 show a composition bias toward polar residues.

This sequence belongs to the protein kinase superfamily. Ser/Thr protein kinase family.

The protein localises to the membrane. It carries out the reaction L-seryl-[protein] + ATP = O-phospho-L-seryl-[protein] + ADP + H(+). It catalyses the reaction L-threonyl-[protein] + ATP = O-phospho-L-threonyl-[protein] + ADP + H(+). Its function is as follows. Serine/threonine-protein kinase that may function as a signaling receptor of extracellular matrix component. This is Wall-associated receptor kinase-like 14 (WAKL14) from Arabidopsis thaliana (Mouse-ear cress).